The primary structure comprises 419 residues: Adenylosuccinate synthetase (419 aa).

Residues 11–17 (GDEGKGK) and 39–41 (GHS) each bind GTP. The Proton acceptor role is filled by aspartate 12. Mg(2+) contacts are provided by aspartate 12 and glycine 39. IMP-binding positions include 12-15 (DEGK), 37-40 (NAGH), threonine 129, arginine 143, asparagine 221, threonine 236, and arginine 296. The active-site Proton donor is the histidine 40. 292-298 (VSTGRKR) serves as a coordination point for substrate. Residues arginine 298, 324–326 (KLD), and 408–410 (GTG) contribute to the GTP site.

Belongs to the adenylosuccinate synthetase family. In terms of assembly, homodimer. Requires Mg(2+) as cofactor.

Its subcellular location is the cytoplasm. It carries out the reaction IMP + L-aspartate + GTP = N(6)-(1,2-dicarboxyethyl)-AMP + GDP + phosphate + 2 H(+). It functions in the pathway purine metabolism; AMP biosynthesis via de novo pathway; AMP from IMP: step 1/2. Plays an important role in the de novo pathway and in the salvage pathway of purine nucleotide biosynthesis. Catalyzes the first committed step in the biosynthesis of AMP from IMP. The protein is Adenylosuccinate synthetase of Chaetomium globosum (strain ATCC 6205 / CBS 148.51 / DSM 1962 / NBRC 6347 / NRRL 1970) (Soil fungus).